The chain runs to 278 residues: Shikimate dehydrogenase (NADP(+)) (278 aa).

Shikimate is bound by residues 19–21 and T66; that span reads SLS. Residue K70 is the Proton acceptor of the active site. D82 lines the NADP(+) pocket. Shikimate contacts are provided by N91 and D107. Residues 133 to 137, 157 to 162, and I222 each bind NADP(+); these read GSGGA and NRTRAR. Y224 lines the shikimate pocket. G245 is a binding site for NADP(+).

This sequence belongs to the shikimate dehydrogenase family. As to quaternary structure, homodimer.

It carries out the reaction shikimate + NADP(+) = 3-dehydroshikimate + NADPH + H(+). The protein operates within metabolic intermediate biosynthesis; chorismate biosynthesis; chorismate from D-erythrose 4-phosphate and phosphoenolpyruvate: step 4/7. Its function is as follows. Involved in the biosynthesis of the chorismate, which leads to the biosynthesis of aromatic amino acids. Catalyzes the reversible NADPH linked reduction of 3-dehydroshikimate (DHSA) to yield shikimate (SA). The polypeptide is Shikimate dehydrogenase (NADP(+)) (Jannaschia sp. (strain CCS1)).